The sequence spans 464 residues: Lysosomal dipeptide transporter MFSD1 (464 aa).

The Dileucine internalization motif motif lies at 11–12; the sequence is LL. Serine 20 is modified (phosphoserine). 12 helical membrane passes run 38 to 58, 82 to 102, 112 to 132, 134 to 154, 190 to 210, 214 to 234, 265 to 285, 303 to 323, 330 to 350, 360 to 380, 391 to 411, and 417 to 437; these read LAHRLVVLSLMCFLGFGSYFC, LLYAWYSWPNVVLCFLGGFLI, TVIFSCFVCIGQVIFALGGIF, AFWLMELGRFVFGIGGESLAV, LMGWLYGKIEALLGSAGHMTL, LMIGCITCIFSLICALALAYL, LILVFVICVCYYVAVFPFIGL, AINSIVYIISAPMSPLFGLLV, IIWVLYAVAATLVSHMMLAFT, LLGFSYSLLACALWPMVAFIV, FMQSIQNLGLAVIAILAGMIL, and LLLEVFFIACVSLSLLAVVCL.

This sequence belongs to the major facilitator superfamily. In terms of assembly, homodimer. Interacts with lysosomal protein GLMP (via lumenal domain); the interaction starts while both proteins are still in the endoplasmic reticulum and is required for stabilization of MFSD1 in lysosomes but has no direct effect on its targeting to lysosomes or transporter activity. Post-translationally, not N-glycosylated. In brain, expressed in the cortex, striatum hippocampus, hypothalamus, thalamus and brainstem (at protein level). Widely expressed with highest levels in kidney and spleen (at protein level).

The protein localises to the lysosome membrane. It carries out the reaction L-alpha-aminoacyl-L-arginine(out) = L-alpha-aminoacyl-L-arginine(in). The catalysed reaction is L-arginyl-L-alpha-amino acid(out) = L-arginyl-L-alpha-amino acid(in). The enzyme catalyses L-arginyl-glycine(out) = L-arginyl-glycine(in). It catalyses the reaction L-alpha-aminoacyl-L-lysine(out) = L-alpha-aminoacyl-L-lysine(in). It carries out the reaction L-aspartyl-L-lysine(out) = L-aspartyl-L-lysine(in). The catalysed reaction is L-alanyl-L-lysine(out) = L-alanyl-L-lysine(in). The enzyme catalyses L-lysyl-L-alpha-amino acid(out) = L-lysyl-L-alpha-amino acid(in). It catalyses the reaction L-lysyl-L-alanine(out) = L-lysyl-L-alanine(in). It carries out the reaction L-lysyl-L-lysine(out) = L-lysyl-L-lysine(in). The catalysed reaction is L-lysyl-glycine(out) = L-lysyl-glycine(in). The enzyme catalyses L-alpha-aminoacyl-L-histidine(out) = L-alpha-aminoacyl-L-histidine(in). It catalyses the reaction L-histidyl-L-alpha-amino acid(out) = L-histidyl-L-alpha-amino acid(in). It carries out the reaction L-histidyl-glycine(out) = L-histidyl-glycine(in). Its function is as follows. Lysosomal dipeptide uniporter that selectively exports lysine, arginine or histidine-containing dipeptides with a net positive charge from the lysosome lumen into the cytosol. Could play a role in a specific type of protein O-glycosylation indirectly regulating macrophages migration and tissue invasion. Also essential for liver homeostasis. In Mus musculus (Mouse), this protein is Lysosomal dipeptide transporter MFSD1.